We begin with the raw amino-acid sequence, 148 residues long: Single-stranded DNA-binding protein, mitochondrial (148 aa).

The N-terminal 16 residues, 1–16 (MFRRPVLQVLRQFVRH), are a transit peptide targeting the mitochondrion. The region spanning 30–141 (LNRVHLLGRV…IIADNIIFLS (112 aa)) is the SSB domain. Residues Ser67 and Ser79 each carry the phosphoserine modification. Position 113 is an N6-acetyllysine (Lys113). Lys122 is modified (N6-succinyllysine).

As to quaternary structure, homotetramer. Interacts with MPG/AAG, through inhibition of its glycosylase activity it potentially prevents formation of DNA breaks in ssDNA, ensuring that base removal primarily occurs in dsDNA. Interacts with POLDIP2. Interacts with PRIMPOL.

The protein localises to the mitochondrion. Its subcellular location is the mitochondrion matrix. It is found in the mitochondrion nucleoid. In terms of biological role, binds preferentially and cooperatively to pyrimidine rich single-stranded DNA (ss-DNA). In vitro, required to maintain the copy number of mitochondrial DNA (mtDNA) and plays a crucial role during mtDNA replication by stimulating the activity of the replisome components POLG and TWNK at the replication fork. Promotes the activity of the gamma complex polymerase POLG, largely by organizing the template DNA and eliminating secondary structures to favor ss-DNA conformations that facilitate POLG activity. In addition it is able to promote the 5'-3' unwinding activity of the mtDNA helicase TWNK. May also function in mtDNA repair. The polypeptide is Single-stranded DNA-binding protein, mitochondrial (SSBP1) (Pongo abelii (Sumatran orangutan)).